The sequence spans 274 residues: Indole-3-glycerol phosphate synthase (274 aa).

This sequence belongs to the TrpC family.

The enzyme catalyses 1-(2-carboxyphenylamino)-1-deoxy-D-ribulose 5-phosphate + H(+) = (1S,2R)-1-C-(indol-3-yl)glycerol 3-phosphate + CO2 + H2O. Its pathway is amino-acid biosynthesis; L-tryptophan biosynthesis; L-tryptophan from chorismate: step 4/5. The sequence is that of Indole-3-glycerol phosphate synthase from Kineococcus radiotolerans (strain ATCC BAA-149 / DSM 14245 / SRS30216).